A 722-amino-acid chain; its full sequence is uncharacterized protein (722 aa).

This is an uncharacterized protein from Treponema pallidum (strain Nichols).